Reading from the N-terminus, the 238-residue chain is MATPHINAEMGDFADVVLMPGDPLRAQYIAETFLEDARQVNNVRGMLGFTGTYKGRRISVMGHGMGIPSCSIYAKELITEFGVKKIIRIGSCGAVSEDVKIRDVVIGMGACTDSKVNRMRFKDHDFAAIADFDLVRHAVDAAKAKNINTRVGNIFSVDLFYSPDPQMFDVMEKYGILGVEMEAAGIYGVAAEFGAKALAICTVSDHIRTGEQTTAEERQHTFNDMIEIALESILLGDN.

Residue His5 coordinates a purine D-ribonucleoside. Phosphate is bound by residues Gly21, Arg25, Arg44, and 88-91 (RIGS). A purine D-ribonucleoside-binding positions include 180 to 182 (EME) and 204 to 205 (SD). Residue Asp205 is the Proton donor of the active site.

The protein belongs to the PNP/UDP phosphorylase family. Homohexamer; trimer of homodimers.

The catalysed reaction is a purine D-ribonucleoside + phosphate = a purine nucleobase + alpha-D-ribose 1-phosphate. The enzyme catalyses a purine 2'-deoxy-D-ribonucleoside + phosphate = a purine nucleobase + 2-deoxy-alpha-D-ribose 1-phosphate. In terms of biological role, catalyzes the reversible phosphorolytic breakdown of the N-glycosidic bond in the beta-(deoxy)ribonucleoside molecules, with the formation of the corresponding free purine bases and pentose-1-phosphate. This chain is Purine nucleoside phosphorylase DeoD-type, found in Xenorhabdus nematophila (strain ATCC 19061 / DSM 3370 / CCUG 14189 / LMG 1036 / NCIMB 9965 / AN6).